Reading from the N-terminus, the 560-residue chain is Diphtheria toxin (560 aa).

An N-terminal signal peptide occupies residues 1–25 (MSRKLFASILIGALLGIGAPPSAHA). Positions 46 and 90 each coordinate NAD(+). The active site involves Glu-173. Disulfide bonds link Cys-211–Cys-226 and Cys-486–Cys-496.

As to quaternary structure, homodimer.

It carries out the reaction diphthamide-[translation elongation factor 2] + NAD(+) = N-(ADP-D-ribosyl)diphthamide-[translation elongation factor 2] + nicotinamide + H(+). In terms of biological role, diphtheria toxin, produced by a phage infecting Corynebacterium diphtheriae, is a proenzyme that, after activation, catalyzes the covalent attachment of the ADP ribose moiety of NAD to elongation factor 2. Fragment A is responsible for enzymatic ADP-ribosylation of elongation factor 2, while fragment B is responsible for binding of toxin to cell receptors and entry of fragment A. The sequence is that of Diphtheria toxin from Corynephage omega.